Consider the following 253-residue polypeptide: Hydroxyacylglutathione hydrolase (253 aa).

Residues H54, H56, D58, H59, H112, D131, and H169 each coordinate Zn(2+).

This sequence belongs to the metallo-beta-lactamase superfamily. Glyoxalase II family. Monomer. The cofactor is Zn(2+).

It carries out the reaction an S-(2-hydroxyacyl)glutathione + H2O = a 2-hydroxy carboxylate + glutathione + H(+). Its pathway is secondary metabolite metabolism; methylglyoxal degradation; (R)-lactate from methylglyoxal: step 2/2. Thiolesterase that catalyzes the hydrolysis of S-D-lactoyl-glutathione to form glutathione and D-lactic acid. This Bartonella quintana (strain Toulouse) (Rochalimaea quintana) protein is Hydroxyacylglutathione hydrolase.